A 128-amino-acid chain; its full sequence is MRFAIVVTGPAYGTQQASSAFQFAQALIAEGHELSSVFFYREGVYNANQLTSPASDEFDLVRGWQQLNAQHGVALNICVAAALRRGIVDETEAGRLGLASSNLQSGFTLSGLGALAEASLTCDRVVQF.

The active-site Cysteine persulfide intermediate is the C78.

Belongs to the DsrE/TusD family. In terms of assembly, heterohexamer, formed by a dimer of trimers. The hexameric TusBCD complex contains 2 copies each of TusB, TusC and TusD. The TusBCD complex interacts with TusE.

The protein localises to the cytoplasm. In terms of biological role, part of a sulfur-relay system required for 2-thiolation of 5-methylaminomethyl-2-thiouridine (mnm(5)s(2)U) at tRNA wobble positions. Accepts sulfur from TusA and transfers it in turn to TusE. The protein is Sulfurtransferase TusD of Escherichia coli O17:K52:H18 (strain UMN026 / ExPEC).